The primary structure comprises 178 residues: Adenine phosphoribosyltransferase (178 aa).

It belongs to the purine/pyrimidine phosphoribosyltransferase family. In terms of assembly, homodimer.

The protein resides in the cytoplasm. The enzyme catalyses AMP + diphosphate = 5-phospho-alpha-D-ribose 1-diphosphate + adenine. Its pathway is purine metabolism; AMP biosynthesis via salvage pathway; AMP from adenine: step 1/1. In terms of biological role, catalyzes a salvage reaction resulting in the formation of AMP, that is energically less costly than de novo synthesis. The chain is Adenine phosphoribosyltransferase from Pseudoalteromonas atlantica (strain T6c / ATCC BAA-1087).